The primary structure comprises 147 residues: Large ribosomal subunit protein uL15 (147 aa).

Positions 1 to 59 are disordered; that stretch reads MKLYELKPAPGSKKNRKRVGRGESSGHGKTSTRGHKGQWARSGGGVRPGFEGGQMPLTR. Gly residues predominate over residues 42 to 52; the sequence is SGGGVRPGFEG.

It belongs to the universal ribosomal protein uL15 family. Part of the 50S ribosomal subunit.

Its function is as follows. Binds to the 23S rRNA. This Caldicellulosiruptor bescii (strain ATCC BAA-1888 / DSM 6725 / KCTC 15123 / Z-1320) (Anaerocellum thermophilum) protein is Large ribosomal subunit protein uL15.